The following is a 337-amino-acid chain: Glyceraldehyde-3-phosphate dehydrogenase (337 aa).

Residues 17-18 (RI), Asp-39, Lys-83, and Ser-125 contribute to the NAD(+) site. Residues 156–158 (SCT), Thr-187, Arg-202, 215–216 (TG), and Arg-238 contribute to the D-glyceraldehyde 3-phosphate site. The Nucleophile role is filled by Cys-157. Asn-319 provides a ligand contact to NAD(+).

Belongs to the glyceraldehyde-3-phosphate dehydrogenase family. In terms of assembly, homotetramer.

The protein resides in the cytoplasm. The catalysed reaction is D-glyceraldehyde 3-phosphate + phosphate + NAD(+) = (2R)-3-phospho-glyceroyl phosphate + NADH + H(+). The protein operates within carbohydrate degradation; glycolysis; pyruvate from D-glyceraldehyde 3-phosphate: step 1/5. In terms of biological role, catalyzes the oxidative phosphorylation of glyceraldehyde 3-phosphate (G3P) to 1,3-bisphosphoglycerate (BPG) using the cofactor NAD. The first reaction step involves the formation of a hemiacetal intermediate between G3P and a cysteine residue, and this hemiacetal intermediate is then oxidized to a thioester, with concomitant reduction of NAD to NADH. The reduced NADH is then exchanged with the second NAD, and the thioester is attacked by a nucleophilic inorganic phosphate to produce BPG. The sequence is that of Glyceraldehyde-3-phosphate dehydrogenase (gapA) from Mycoplasma pneumoniae (strain ATCC 29342 / M129 / Subtype 1) (Mycoplasmoides pneumoniae).